A 308-amino-acid chain; its full sequence is Probable manganese-dependent inorganic pyrophosphatase (308 aa).

Positions 9, 13, 15, 75, 97, and 149 each coordinate Mn(2+).

The protein belongs to the PPase class C family. It depends on Mn(2+) as a cofactor.

Its subcellular location is the cytoplasm. It carries out the reaction diphosphate + H2O = 2 phosphate + H(+). The chain is Probable manganese-dependent inorganic pyrophosphatase from Listeria innocua serovar 6a (strain ATCC BAA-680 / CLIP 11262).